A 224-amino-acid chain; its full sequence is MELIGHGHSCIEIRLNDGTNLLFDPFINGNPLADVSLADLHPDYILITHGHSDHIGDMLAIAQANKATIIAIAEVAMYAQSQGVKAHGMNLGGRYVFPFGSVKFVPALHSSGYEIDGVMTYMGEASGIILEAEDKKIYHAGDTALFSDMRLFAKDKSIDVAFLPIGDNYTMGPEDALEAIAYLNPEITIPIHYNTFPVIQQNPAIFVEQVVGGKVLNPGETILV.

It belongs to the UPF0173 family.

The polypeptide is UPF0173 metal-dependent hydrolase EF_1371 (Enterococcus faecalis (strain ATCC 700802 / V583)).